Reading from the N-terminus, the 237-residue chain is 1-(5-phosphoribosyl)-5-[(5-phosphoribosylamino)methylideneamino] imidazole-4-carboxamide isomerase (237 aa).

Asp-8 (proton acceptor) is an active-site residue. The Proton donor role is filled by Asp-129.

The protein belongs to the HisA/HisF family.

Its subcellular location is the cytoplasm. It catalyses the reaction 1-(5-phospho-beta-D-ribosyl)-5-[(5-phospho-beta-D-ribosylamino)methylideneamino]imidazole-4-carboxamide = 5-[(5-phospho-1-deoxy-D-ribulos-1-ylimino)methylamino]-1-(5-phospho-beta-D-ribosyl)imidazole-4-carboxamide. Its pathway is amino-acid biosynthesis; L-histidine biosynthesis; L-histidine from 5-phospho-alpha-D-ribose 1-diphosphate: step 4/9. This is 1-(5-phosphoribosyl)-5-[(5-phosphoribosylamino)methylideneamino] imidazole-4-carboxamide isomerase from Dehalococcoides mccartyi (strain ATCC BAA-2266 / KCTC 15142 / 195) (Dehalococcoides ethenogenes (strain 195)).